Here is a 545-residue protein sequence, read N- to C-terminus: MVVKYTMSMSFFVIFASTVTIIVHGFPSTLDGPLNPVTAPLDPNLNPIAFDLPESDPSFVKPISEFLLPEQISVSLSYSFDSVWISWVTGEYQIGEKDSAPLDPNCVQSIVQYREFDVRRTRKQNATGHSIVYNQQYSSENGFMNYTSGIIHHVQLTGLKPNTLYRYQCGDPSLSAMSKEYYFRTMPKSTSENYPHRIVVAGDLGLTYNTSTVLGHILSNHPDLVVLLGGFSYADTYLANKTKLDCSSCHCDQNGTSSDCGSCYSSGETYQPRWDYWGRFMEPLTANVPTMMVAGEHEIEPQTENNLTFAAYSSRFAFPSNESGSFSPLYYSFNAGGAHFIVLNSYTLYDNSSDQYIWLESDLIKINRSETPWVVATWSLPWYSTFKGHYREAESMRIHLEDLLYNYRVDIVFNSHVDAYERSNRVYNYTLDQCGPVYITTGAGGAGKLETQHVDDPGNIPDPSQNYSCRSSGLNSTLEPVKDETCPVKQPEYSAYRESSFGFGILEVKNETHALWSWNRNQDLYYLAADVIHIVRQPEMCSVCN.

Residues 1–25 form the signal peptide; that stretch reads MVVKYTMSMSFFVIFASTVTIIVHG. Asparagine 125 and asparagine 145 each carry an N-linked (GlcNAc...) asparagine glycan. Aspartate 203 serves as a coordination point for Fe cation. N-linked (GlcNAc...) asparagine glycosylation occurs at asparagine 209. Tyrosine 233 provides a ligand contact to Fe cation. N-linked (GlcNAc...) asparagine glycans are attached at residues asparagine 240, asparagine 254, asparagine 306, asparagine 321, asparagine 351, and asparagine 367. The active-site Proton donor is the histidine 389. A Zn(2+)-binding site is contributed by histidine 416. 416–418 contacts substrate; that stretch reads HVD. Residues asparagine 428, asparagine 466, asparagine 475, and asparagine 510 are each glycosylated (N-linked (GlcNAc...) asparagine).

The protein belongs to the metallophosphoesterase superfamily. Purple acid phosphatase family. As to quaternary structure, homodimer. Fe cation serves as cofactor. Zn(2+) is required as a cofactor. In terms of tissue distribution, expressed in stems, leaves, flowers and siliques.

Its subcellular location is the secreted. The enzyme catalyses a phosphate monoester + H2O = an alcohol + phosphate. This Arabidopsis thaliana (Mouse-ear cress) protein is Purple acid phosphatase 13 (PAP13).